Reading from the N-terminus, the 504-residue chain is Cholesterol 7-alpha-monooxygenase (504 aa).

Cys444 contacts heme.

The protein belongs to the cytochrome P450 family. The cofactor is heme.

Its subcellular location is the endoplasmic reticulum membrane. It localises to the microsome membrane. The enzyme catalyses cholesterol + reduced [NADPH--hemoprotein reductase] + O2 = 7alpha-hydroxycholesterol + oxidized [NADPH--hemoprotein reductase] + H2O + H(+). It functions in the pathway lipid metabolism; bile acid biosynthesis. Its function is as follows. Catalyzes a rate-limiting step in cholesterol catabolism and bile acid biosynthesis by introducing a hydrophilic moiety at position 7 of cholesterol. Important for cholesterol homeostasis. The chain is Cholesterol 7-alpha-monooxygenase (CYP7A1) from Cricetulus griseus (Chinese hamster).